A 454-amino-acid polypeptide reads, in one-letter code: Allantoinase (454 aa).

His58, His60, Lys149, His189, His245, and Asp318 together coordinate Zn(2+). Lys149 carries the N6-carboxylysine modification.

This sequence belongs to the metallo-dependent hydrolases superfamily. Allantoinase family. In terms of assembly, homotetramer. It depends on Zn(2+) as a cofactor. Carboxylation allows a single lysine to coordinate two zinc ions.

It carries out the reaction (S)-allantoin + H2O = allantoate + H(+). It participates in nitrogen metabolism; (S)-allantoin degradation; allantoate from (S)-allantoin: step 1/1. Catalyzes the conversion of allantoin (5-ureidohydantoin) to allantoic acid by hydrolytic cleavage of the five-member hydantoin ring. This Enterococcus faecalis (strain ATCC 700802 / V583) protein is Allantoinase.